The following is a 353-amino-acid chain: Histidinol-phosphate aminotransferase (353 aa).

Position 211 is an N6-(pyridoxal phosphate)lysine (Lys211).

Belongs to the class-II pyridoxal-phosphate-dependent aminotransferase family. Histidinol-phosphate aminotransferase subfamily. As to quaternary structure, homodimer. It depends on pyridoxal 5'-phosphate as a cofactor.

It catalyses the reaction L-histidinol phosphate + 2-oxoglutarate = 3-(imidazol-4-yl)-2-oxopropyl phosphate + L-glutamate. It participates in amino-acid biosynthesis; L-histidine biosynthesis; L-histidine from 5-phospho-alpha-D-ribose 1-diphosphate: step 7/9. This Klebsiella pneumoniae subsp. pneumoniae (strain ATCC 700721 / MGH 78578) protein is Histidinol-phosphate aminotransferase.